The chain runs to 211 residues: Putative 3-methyladenine DNA glycosylase (211 aa).

The protein belongs to the DNA glycosylase MPG family.

The polypeptide is Putative 3-methyladenine DNA glycosylase (Granulibacter bethesdensis (strain ATCC BAA-1260 / CGDNIH1)).